Reading from the N-terminus, the 426-residue chain is UDP-N-acetylglucosamine 1-carboxyvinyltransferase (426 aa).

A phosphoenolpyruvate-binding site is contributed by 22 to 23; the sequence is KN. UDP-N-acetyl-alpha-D-glucosamine is bound at residue arginine 94. Cysteine 118 acts as the Proton donor in catalysis. Residue cysteine 118 is modified to 2-(S-cysteinyl)pyruvic acid O-phosphothioketal. Residues 123-127, aspartate 309, and isoleucine 331 each bind UDP-N-acetyl-alpha-D-glucosamine; that span reads RPVDL.

It belongs to the EPSP synthase family. MurA subfamily.

Its subcellular location is the cytoplasm. The enzyme catalyses phosphoenolpyruvate + UDP-N-acetyl-alpha-D-glucosamine = UDP-N-acetyl-3-O-(1-carboxyvinyl)-alpha-D-glucosamine + phosphate. Its pathway is cell wall biogenesis; peptidoglycan biosynthesis. Its function is as follows. Cell wall formation. Adds enolpyruvyl to UDP-N-acetylglucosamine. This Paracoccus denitrificans (strain Pd 1222) protein is UDP-N-acetylglucosamine 1-carboxyvinyltransferase.